An 89-amino-acid chain; its full sequence is Putative acyl-CoA-binding protein (89 aa).

One can recognise an ACB domain in the interval 3 to 88; it reads VEEQFKTSAE…VKELVEKNGL (86 aa). An acyl-CoA contacts are provided by residues Lys-15, 30-34, Lys-52, Lys-56, and Tyr-75; that span reads YSLYK.

This sequence belongs to the ACBP family.

Its function is as follows. Binds medium- and long-chain acyl-CoA esters with very high affinity and may function as an intracellular carrier of acyl-CoA esters. The chain is Putative acyl-CoA-binding protein from Hypsibius exemplaris (Freshwater tardigrade).